Consider the following 305-residue polypeptide: MTTPPSSPLSDPRRTEGVHPTHTDLDRLDPLALVQVFTDDQRAAVEAVRAAVPALARAVEAALPRLERGGRLVYVGAGTSGRLAVLDATELTPTFSWPPERAVPLIAGGERAIRQAVEGAEDDAEAGAADVRAAGTGPQDVLIALAASGTTPYVLGAVRAARALGALTIGLANNPGTPLLAAAECPILLDTGPEVISGSTRLKAGTAQKIALNTLSSALMVRLGKVYGNLMVDVKVSNAKLETRALRLTCHATGASEAEARAALAQAGGRVKTALVMLRLGLSAPEAEVRLQAAGGHARVALGEG.

Residues 1–24 form a disordered region; sequence MTTPPSSPLSDPRRTEGVHPTHTD. The span at 11-24 shows a compositional bias: basic and acidic residues; sequence DPRRTEGVHPTHTD. One can recognise an SIS domain in the interval 62 to 225; the sequence is ALPRLERGGR…SSALMVRLGK (164 aa). The active-site Proton donor is the Glu-90. Glu-121 is an active-site residue.

It belongs to the GCKR-like family. MurNAc-6-P etherase subfamily. Homodimer.

The enzyme catalyses N-acetyl-D-muramate 6-phosphate + H2O = N-acetyl-D-glucosamine 6-phosphate + (R)-lactate. It participates in amino-sugar metabolism; N-acetylmuramate degradation. In terms of biological role, specifically catalyzes the cleavage of the D-lactyl ether substituent of MurNAc 6-phosphate, producing GlcNAc 6-phosphate and D-lactate. This chain is N-acetylmuramic acid 6-phosphate etherase, found in Deinococcus geothermalis (strain DSM 11300 / CIP 105573 / AG-3a).